Consider the following 353-residue polypeptide: UPF0283 membrane protein YcjF (353 aa).

A disordered region spans residues 16 to 35; the sequence is KEESTSAFKAQQTFSEAESR. Residues 20–31 show a composition bias toward polar residues; that stretch reads TSAFKAQQTFSE. 3 helical membrane passes run 70–90, 100–120, and 213–233; these read MVMGGLALFGASVVGQGVQWT, VALGGCAAGALIIGAGVGSVV, and ESTLMIAVSPLALVDMAFIAW.

The protein belongs to the UPF0283 family.

It is found in the cell inner membrane. The protein is UPF0283 membrane protein YcjF of Salmonella heidelberg (strain SL476).